Consider the following 179-residue polypeptide: Large ribosomal subunit protein uL6 (179 aa).

The protein belongs to the universal ribosomal protein uL6 family. As to quaternary structure, part of the 50S ribosomal subunit.

Its function is as follows. This protein binds to the 23S rRNA, and is important in its secondary structure. It is located near the subunit interface in the base of the L7/L12 stalk, and near the tRNA binding site of the peptidyltransferase center. The protein is Large ribosomal subunit protein uL6 of Mycolicibacterium gilvum (strain PYR-GCK) (Mycobacterium gilvum (strain PYR-GCK)).